Reading from the N-terminus, the 169-residue chain is Transmembrane protein B169L (169 aa).

2 consecutive transmembrane segments (helical) span residues Asn-28–Cys-48 and Thr-60–Asn-80. Asn-88 carries N-linked (GlcNAc...) asparagine; by host glycosylation. The disordered stretch occupies residues Asp-107 to Asn-169. Positions Ser-144–Pro-154 are enriched in low complexity.

It belongs to the asfivirus B169L family.

The protein resides in the host membrane. It is found in the virion. In Ornithodoros (relapsing fever ticks), this protein is Transmembrane protein B169L.